The following is a 235-amino-acid chain: Fibrillarin-like rRNA/tRNA 2'-O-methyltransferase (235 aa).

Residues 91-92, 110-111, 137-138, and 157-160 contribute to the S-adenosyl-L-methionine site; these read TT, EF, DA, and DVAQ.

Belongs to the methyltransferase superfamily. Fibrillarin family. As to quaternary structure, interacts with nop5. Component of box C/D small ribonucleoprotein (sRNP) particles that contain rpl7ae, FlpA and nop5, plus a guide RNA.

Involved in pre-rRNA and tRNA processing. Utilizes the methyl donor S-adenosyl-L-methionine to catalyze the site-specific 2'-hydroxyl methylation of ribose moieties in rRNA and tRNA. Site specificity is provided by a guide RNA that base pairs with the substrate. Methylation occurs at a characteristic distance from the sequence involved in base pairing with the guide RNA. The chain is Fibrillarin-like rRNA/tRNA 2'-O-methyltransferase from Pyrobaculum islandicum (strain DSM 4184 / JCM 9189 / GEO3).